A 396-amino-acid chain; its full sequence is Protein TOC75-4, chloroplastic (396 aa).

Residues 1–23 (MEAVKEAVRKIKSLVIPHADEKD) lie on the Chloroplast intermembrane side of the membrane. Residues 24-32 (NGIVFEIKL) traverse the membrane as a beta stranded segment. Residues 33–87 (NETDQRVEKWGLDPSLDFFEVTGNCNLGRPNSEGSNQSLMGSVTIRNIFNPKLDD) lie on the Cytoplasmic side of the membrane. The beta stranded transmembrane segment at 88–96 (LLSKIEYVR) threads the bilayer. Topologically, residues 97–140 (FLEAVKKPRNRTFKTSFFNSRKLSPVFTGGPGYEDLVPPMFVGR) are chloroplast intermembrane. A beta stranded membrane pass occupies residues 141–148 (DCLKATIT). The Cytoplasmic segment spans residues 149–156 (ENLTRQRE). Residues 157–164 (LTYGVMFE) traverse the membrane as a beta stranded segment. The Chloroplast intermembrane portion of the chain corresponds to 165–271 (EIITRDENRR…VEEGSDKPQP (107 aa)). Residues 272-280 (PVLVLHGRY) form a beta stranded membrane-spanning segment. The Cytoplasmic portion of the chain corresponds to 281–292 (GGCIGDLPSYDV). The chain crosses the membrane as a beta stranded span at residues 293–301 (FALGGPNSV). Residues 302–363 (RGYSMGELGA…LYRKMGHGSS (62 aa)) are Chloroplast intermembrane-facing. Residues 364 to 370 (YGLGVKL) traverse the membrane as a beta stranded segment. Residues 371 to 384 (GMVRAEYTVRHNRG) are Cytoplasmic-facing. A beta stranded transmembrane segment spans residues 385–392 (TGALFLRF). The Chloroplast intermembrane segment spans residues 393–396 (GERY).

Belongs to the TOC75 family. In terms of assembly, part of the TOC core complex that includes a protein for the specific recognition of transit peptides surrounded by a ring composed of four proteins forming translocation channels, and four to five GTP-binding proteins providing energy. This core complex can interact with components of the TIC complex to form a larger import complex. Chloroplastic protein precursors also interacts with these complexes. As to expression, expressed ubiquitously at low levels.

It is found in the plastid. The protein localises to the chloroplast outer membrane. Functionally, mediates the insertion of proteins targeted to the outer membrane of chloroplasts. Required for the import of protein precursors into chloroplasts. Forms the voltage-dependent preprotein translocation channels (hydrophilic beta barrel) of the TOC complex in the chloroplastic outer membrane. Required for etioplast formation and/or etioplast-chloroplast transition during deetiolation. The sequence is that of Protein TOC75-4, chloroplastic (TOC75-4) from Arabidopsis thaliana (Mouse-ear cress).